The chain runs to 496 residues: Isocitrate dehydrogenase [NADP] (496 aa).

Residues L88 and T90 each coordinate NADP(+). 5 residues coordinate D-threo-isocitrate: S98, N100, R104, R114, and R137. NADP(+)-binding residues include N193, Q229, and K232. Mg(2+) is bound at residue D248. Positions 277, 281, 282, 283, 285, 286, and 293 each coordinate NADP(+).

It belongs to the isocitrate and isopropylmalate dehydrogenases family. As to quaternary structure, homodimer. Mg(2+) is required as a cofactor. Requires Mn(2+) as cofactor.

The enzyme catalyses D-threo-isocitrate + NADP(+) = 2-oxoglutarate + CO2 + NADPH. Its function is as follows. Catalyzes the oxidative decarboxylation of isocitrate to 2-oxoglutarate and carbon dioxide with the concomitant reduction of NADP(+). The sequence is that of Isocitrate dehydrogenase [NADP] (icd) from Thermus thermophilus (strain ATCC 27634 / DSM 579 / HB8).